Reading from the N-terminus, the 62-residue chain is Large ribosomal subunit protein bL33 (62 aa).

Belongs to the bacterial ribosomal protein bL33 family.

The chain is Large ribosomal subunit protein bL33 from Trichodesmium erythraeum (strain IMS101).